We begin with the raw amino-acid sequence, 143 residues long: Aspartate 1-decarboxylase (143 aa).

Catalysis depends on Ser-25, which acts as the Schiff-base intermediate with substrate; via pyruvic acid. Ser-25 carries the pyruvic acid (Ser) modification. A substrate-binding site is contributed by Thr-57. The Proton donor role is filled by Tyr-58. Residue 73–75 (GAA) participates in substrate binding.

Belongs to the PanD family. In terms of assembly, heterooctamer of four alpha and four beta subunits. It depends on pyruvate as a cofactor. Post-translationally, is synthesized initially as an inactive proenzyme, which is activated by self-cleavage at a specific serine bond to produce a beta-subunit with a hydroxyl group at its C-terminus and an alpha-subunit with a pyruvoyl group at its N-terminus.

It is found in the cytoplasm. The catalysed reaction is L-aspartate + H(+) = beta-alanine + CO2. Its pathway is cofactor biosynthesis; (R)-pantothenate biosynthesis; beta-alanine from L-aspartate: step 1/1. Its function is as follows. Catalyzes the pyruvoyl-dependent decarboxylation of aspartate to produce beta-alanine. The sequence is that of Aspartate 1-decarboxylase from Mycolicibacterium paratuberculosis (strain ATCC BAA-968 / K-10) (Mycobacterium paratuberculosis).